Here is a 534-residue protein sequence, read N- to C-terminus: MKQEGSARRRGADKAKPPPGGGEQEPPPPPAPQDVEMKEEAAAGGGSTGETAGKTAAAAAEHSQRELDTVTLEDIKEHVKQLEKAVSGKEPRFVLRALRMLPSTSRRLNHYVLYKAVHGFFTSNNATRDFLLPFLEEPMDTEADLQFRPRTGKAASAPLLPEVEAYLQLLMVIFLMNSKRYKEAQKISDDLMQKISTQNRRALDLVAAKCYYYHARVYEFLDKLDVVRSFLHARLRTATLRHDTDGQATLLNLLLRNYLHYSLYDQAEKLVSKSVFPEQANNNEWARYLYYTGRIKAIQLEYSEARRTMTNALRKAPQHTAVGFKQTVHKLLIVVELLLGEIPDRLQFRQPSLKRSLMPYFLLTQAVRTGNLAKFNQVLDQFGEKFQADGTYTLIIRLRHNVIKTGVRMISLSYSRISLADIAQKLQLDSPEDAEFIVAKAIRDGVIEASINHEKGYVQSKEMIDIYSTREPQLAFHQRISFCLDIHNMSVKAMRFPPKSYNKDLESAEERREREQQDLEFAKEMAEDDDDSFP.

Positions 1–16 (MKQEGSARRRGADKAK) are enriched in basic and acidic residues. A disordered region spans residues 1–68 (MKQEGSARRR…AAEHSQRELD (68 aa)). Over residues 17-32 (PPPGGGEQEPPPPPAP) the composition is skewed to pro residues. Residue K38 forms a Glycyl lysine isopeptide (Lys-Gly) (interchain with G-Cter in SUMO1); alternate linkage. K38 participates in a covalent cross-link: Glycyl lysine isopeptide (Lys-Gly) (interchain with G-Cter in SUMO2); alternate. The span at 49–61 (GETAGKTAAAAAE) shows a compositional bias: low complexity. A PCI domain is found at 286-465 (ARYLYYTGRI…GYVQSKEMID (180 aa)). Phosphoserine is present on residues S418 and S430. The tract at residues 500 to 534 (SYNKDLESAEERREREQQDLEFAKEMAEDDDDSFP) is disordered. Positions 501 to 525 (YNKDLESAEERREREQQDLEFAKEM) are enriched in basic and acidic residues.

It belongs to the proteasome subunit S3 family. Component of the 19S proteasome regulatory particle complex. The 26S proteasome consists of a 20S core particle (CP) and two 19S regulatory subunits (RP). The regulatory particle is made of a lid composed of 9 subunits including PSMD3, a base containing 6 ATPases and few additional components. Interacts with UBQLN1 (via ubiquitin-like domain). Interacts with ERCC6.

Functionally, component of the 26S proteasome, a multiprotein complex involved in the ATP-dependent degradation of ubiquitinated proteins. This complex plays a key role in the maintenance of protein homeostasis by removing misfolded or damaged proteins, which could impair cellular functions, and by removing proteins whose functions are no longer required. Therefore, the proteasome participates in numerous cellular processes, including cell cycle progression, apoptosis, or DNA damage repair. This Bos taurus (Bovine) protein is 26S proteasome non-ATPase regulatory subunit 3 (PSMD3).